Consider the following 415-residue polypeptide: Multidrug resistance protein MdtA (415 aa).

The first 21 residues, 1-21 (MKGSYKSRWVIVIVVVIAAIA), serve as a signal peptide directing secretion. Disordered stretches follow at residues 32–56 (SRSAAPGATKQAQQSPAGGRRGMRA) and 392–415 (EAQSATTSEEKATSREYAKKGARS). The segment covering 399 to 415 (SEEKATSREYAKKGARS) has biased composition (basic and acidic residues).

It belongs to the membrane fusion protein (MFP) (TC 8.A.1) family. As to quaternary structure, part of a tripartite efflux system composed of MdtA, MdtB and MdtC.

The protein localises to the cell inner membrane. In terms of biological role, the MdtABC tripartite complex confers resistance against novobiocin and deoxycholate. The sequence is that of Multidrug resistance protein MdtA from Escherichia coli O7:K1 (strain IAI39 / ExPEC).